The sequence spans 368 residues: MGIHDLSKVIADKAPDAIKETEIKNLFDRKVAIDASMSIYQFLIAIRSEGSNLVNEAGEATSHLSGLFYRTIRMVNHGIKPLYVFDGKPPTMKSGELLKRGARRKEAQANLEEATEQGDTEQMEKFSRRLVHVTREHNEQCRQLLTLMGIPFIIAPTEAEAQCAELVKGGKVFATATEDMDALTFGTTVLLRHMTFSEARKMPIQEFRLQKGGLEMSMEEFIDMCILLGCDYCDSIKGIGRQKAYQLIKEHKNIETVLKHLDPKKYVIPEDWHFAEARELFLRPDVTPAAECEFKWTTPDIDGLVKFMCQENGFAEDRIRKSAEKLVKARKGGQQGRLDSFFTAIPSGSAKRNTVGLLPKPGPPPFLF.

An N-domain region spans residues 1–104; that stretch reads MGIHDLSKVI…GELLKRGARR (104 aa). Residue aspartate 34 coordinates Mg(2+). DNA is bound by residues arginine 47 and arginine 70. Aspartate 86 provides a ligand contact to Mg(2+). Residues 103–123 form a disordered region; the sequence is RRKEAQANLEEATEQGDTEQM. Residues 122-251 form an I-domain region; the sequence is QMEKFSRRLV…QKAYQLIKEH (130 aa). Residues glutamate 158, glutamate 160, aspartate 179, and aspartate 181 each coordinate Mg(2+). DNA is bound at residue glutamate 158. Residues glycine 229 and aspartate 231 each contribute to the DNA site. Aspartate 231 provides a ligand contact to Mg(2+). The tract at residues 334-342 is interaction with PCNA; sequence QQGRLDSFF.

It belongs to the XPG/RAD2 endonuclease family. FEN1 subfamily. As to quaternary structure, interacts with PCNA. Three molecules of FEN1 bind to one PCNA trimer with each molecule binding to one PCNA monomer. PCNA stimulates the nuclease activity without altering cleavage specificity. It depends on Mg(2+) as a cofactor. Post-translationally, phosphorylated. Phosphorylation upon DNA damage induces relocalization to the nuclear plasma.

It is found in the nucleus. The protein resides in the nucleolus. Its subcellular location is the nucleoplasm. It localises to the mitochondrion. Its function is as follows. Structure-specific nuclease with 5'-flap endonuclease and 5'-3' exonuclease activities involved in DNA replication and repair. During DNA replication, cleaves the 5'-overhanging flap structure that is generated by displacement synthesis when DNA polymerase encounters the 5'-end of a downstream Okazaki fragment. It enters the flap from the 5'-end and then tracks to cleave the flap base, leaving a nick for ligation. Also involved in the long patch base excision repair (LP-BER) pathway, by cleaving within the apurinic/apyrimidinic (AP) site-terminated flap. Acts as a genome stabilization factor that prevents flaps from equilibrating into structures that lead to duplications and deletions. Also possesses 5'-3' exonuclease activity on nicked or gapped double-stranded DNA, and exhibits RNase H activity. Also involved in replication and repair of rDNA and in repairing mitochondrial DNA. This Monosiga brevicollis (Choanoflagellate) protein is Flap endonuclease 1.